The primary structure comprises 386 residues: MAP kinase-activated protein kinase 2 (386 aa).

Residues 1 to 29 form a disordered region; the sequence is MLSGSPGQTPPAPFPSPPPPAPAQPPPPF. Over residues 8–29 the composition is skewed to pro residues; the sequence is QTPPAPFPSPPPPAPAQPPPPF. The region spanning 50–311 is the Protein kinase domain; the sequence is KVTSQVLGLG…ITEFMNHPWI (262 aa). Residues 56–64 and Lys79 each bind ATP; that span reads LGLGINGKV. 125–127 is a binding site for staurosporine; the sequence is ECL. Asp172 functions as the Proton acceptor in the catalytic mechanism. Position 208 is a phosphothreonine; by MAPK14 (Thr208). Ser258 is modified (phosphoserine; by MAPK14). Ser314 is subject to Phosphoserine; by autocatalysis. Positions 314–350 are autoinhibitory helix; the sequence is STKVPQTPLHTSRVLKEDKERWEDVKEEMTSALATMR. Phosphothreonine; by MAPK14 is present on Thr320. Short sequence motifs (nuclear export signal (NES)) lie at residues 331-354 and 342-351; these read DKERWEDVKEEMTSALATMRVDYE and MTSALATMRV. Lys339 participates in a covalent cross-link: Glycyl lysine isopeptide (Lys-Gly) (interchain with G-Cter in SUMO). Residues 352 to 376 form a p38 MAPK-binding site region; that stretch reads DYEQIKIKKIEDASNPLLLKRRKKA. 2 consecutive short sequence motifs (bipartite nuclear localization signal) follow at residues 357 to 360 and 371 to 375; these read KIKK and KRRKK.

This sequence belongs to the protein kinase superfamily. CAMK Ser/Thr protein kinase family. In terms of assembly, heterodimer with p38-alpha/MAPK14; this heterodimer forms a stable complex: molecules are positioned 'face to face' so that the ATP-binding sites of both kinases are at the heterodimer interface. Interacts with PHC2. Interacts with HSF1. Post-translationally, sumoylation inhibits the protein kinase activity. Phosphorylated and activated by MAP kinase p38-alpha/MAPK14 at Thr-208; Ser-258 and Thr-320. In terms of tissue distribution, ubiquitously expressed (at protein level).

The protein resides in the cytoplasm. The protein localises to the nucleus. The enzyme catalyses L-seryl-[protein] + ATP = O-phospho-L-seryl-[protein] + ADP + H(+). It catalyses the reaction L-threonyl-[protein] + ATP = O-phospho-L-threonyl-[protein] + ADP + H(+). Its activity is regulated as follows. Activated following phosphorylation by p38-alpha/MAPK14 following various stresses. Inhibited following sumoylation. Specifically inhibited by pyrrolopyridine inhibitors. Stress-activated serine/threonine-protein kinase involved in cytokine production, endocytosis, reorganization of the cytoskeleton, cell migration, cell cycle control, chromatin remodeling, DNA damage response and transcriptional regulation. Following stress, it is phosphorylated and activated by MAP kinase p38-alpha/MAPK14, leading to phosphorylation of substrates. Phosphorylates serine in the peptide sequence, Hyd-X-R-X(2)-S, where Hyd is a large hydrophobic residue. Phosphorylates ALOX5, CDC25B, CDC25C, CEP131, ELAVL1, HNRNPA0, HSP27/HSPB1, KRT18, KRT20, LIMK1, LSP1, PABPC1, PARN, PDE4A, RCSD1, RPS6KA3, TAB3 and TTP/ZFP36. Phosphorylates HSF1; leading to the interaction with HSP90 proteins and inhibiting HSF1 homotrimerization, DNA-binding and transactivation activities. Mediates phosphorylation of HSP27/HSPB1 in response to stress, leading to dissociation of HSP27/HSPB1 from large small heat-shock protein (sHsps) oligomers and impairment of their chaperone activities and ability to protect against oxidative stress effectively. Involved in inflammatory response by regulating tumor necrosis factor (TNF) and IL6 production post-transcriptionally: acts by phosphorylating AU-rich elements (AREs)-binding proteins ELAVL1, HNRNPA0, PABPC1 and TTP/ZFP36, leading to regulation of the stability and translation of TNF and IL6 mRNAs. Phosphorylation of TTP/ZFP36, a major post-transcriptional regulator of TNF, promotes its binding to 14-3-3 proteins and reduces its ARE mRNA affinity leading to inhibition of dependent degradation of ARE-containing transcripts. Phosphorylates CEP131 in response to cellular stress following ultraviolet irradiation which promotes binding of CEP131 to 14-3-3 proteins and inhibits formation of novel centriolar satellites. Also involved in late G2/M checkpoint following DNA damage through a process of post-transcriptional mRNA stabilization: following DNA damage, relocalizes from nucleus to cytoplasm and phosphorylates HNRNPA0 and PARN, leading to stabilization of GADD45A mRNA. Involved in toll-like receptor signaling pathway (TLR) in dendritic cells: required for acute TLR-induced macropinocytosis by phosphorylating and activating RPS6KA3. The chain is MAP kinase-activated protein kinase 2 (Mapkapk2) from Mus musculus (Mouse).